A 312-amino-acid polypeptide reads, in one-letter code: MAVPAQPSSPPPVCQFSDRLATALNAAQEATGTDSHHAHHHHTPSGASSAISHTHDNMPHDHGQFHDHGPGLWTPEEHGHTHEHLEHAGKFAERDMPDYTGRNWTERAFTVGIGGPVGSGKTALLLALCRGFREKYNIAAVTNDIFTREDQEFLIRNEALPAERIRAIETGGCPHAAIREDISANMGALEKLQAEFDTEMLFVESGGDNLAANYSRELADYIIYVIDVSGGDKIPRKGGPGITQSDLLIVNKIDLAPHVGASLDVMRRDAAAMRGTGPTLFTSVRNNDGVDAVMDIIVSAWRASQGNGKAKA.

A disordered region spans residues 28–86; the sequence is QEATGTDSHHAHHHHTPSGASSAISHTHDNMPHDHGQFHDHGPGLWTPEEHGHTHEHLE. Residues 36 to 87 are histine rich nickel-binding domain; that stretch reads HHAHHHHTPSGASSAISHTHDNMPHDHGQFHDHGPGLWTPEEHGHTHEHLEH. The span at 53–86 shows a compositional bias: basic and acidic residues; that stretch reads HTHDNMPHDHGQFHDHGPGLWTPEEHGHTHEHLE. The short motif at 115–122 is the GTP binding P-loop element; it reads GPVGSGKT. The Switch domain 1 signature appears at 147–154; that stretch reads TREDQEFL. Positions 171-172 match the switch domain 2 motif; sequence GG.

Belongs to the SIMIBI class G3E GTPase family. UreG subfamily. As to quaternary structure, URE4, URE6 and URE7 may form a complex that acts as a GTP-hydrolysis-dependent molecular chaperone, activating the urease apoprotein URE1.

In terms of biological role, urease accessory protein that binds 2 nickel atoms likely via its conserved histidine-rich domain and supplies nickel for the functional urease URE1. Has probably a dual function as a nickel chaperone and GTPase. Plays a role in host brain invasion. This chain is Urease accessory protein 7, found in Cryptococcus neoformans var. grubii serotype A (strain H99 / ATCC 208821 / CBS 10515 / FGSC 9487) (Filobasidiella neoformans var. grubii).